We begin with the raw amino-acid sequence, 188 residues long: Elongation factor P (188 aa).

K34 is subject to N6-(3,6-diaminohexanoyl)-5-hydroxylysine.

It belongs to the elongation factor P family. In terms of processing, may be beta-lysylated on the epsilon-amino group of Lys-34 by the combined action of EpmA and EpmB, and then hydroxylated on the C5 position of the same residue by EpmC (if this protein is present). Lysylation is critical for the stimulatory effect of EF-P on peptide-bond formation. The lysylation moiety may extend toward the peptidyltransferase center and stabilize the terminal 3-CCA end of the tRNA. Hydroxylation of the C5 position on Lys-34 may allow additional potential stabilizing hydrogen-bond interactions with the P-tRNA.

The protein resides in the cytoplasm. It functions in the pathway protein biosynthesis; polypeptide chain elongation. In terms of biological role, involved in peptide bond synthesis. Alleviates ribosome stalling that occurs when 3 or more consecutive Pro residues or the sequence PPG is present in a protein, possibly by augmenting the peptidyl transferase activity of the ribosome. Modification of Lys-34 is required for alleviation. This chain is Elongation factor P, found in Methylococcus capsulatus (strain ATCC 33009 / NCIMB 11132 / Bath).